Reading from the N-terminus, the 390-residue chain is S-adenosylmethionine synthase 2 (390 aa).

Glu-9 is a binding site for Mg(2+). An ATP-binding site is contributed by His-15. Glu-43 is a K(+) binding site. 2 residues coordinate L-methionine: Glu-56 and Gln-99. ATP-binding positions include 167 to 169 (DGK), 235 to 238 (SGRF), Asp-246, 252 to 253 (RK), Ala-269, Lys-273, and Lys-277. Asp-246 is a binding site for L-methionine. Lys-277 is an L-methionine binding site.

It belongs to the AdoMet synthase family. Homotetramer. The cofactor is Mn(2+). Requires Mg(2+) as cofactor. It depends on Co(2+) as a cofactor. K(+) serves as cofactor.

It is found in the cytoplasm. It carries out the reaction L-methionine + ATP + H2O = S-adenosyl-L-methionine + phosphate + diphosphate. The protein operates within amino-acid biosynthesis; S-adenosyl-L-methionine biosynthesis; S-adenosyl-L-methionine from L-methionine: step 1/1. In terms of biological role, catalyzes the formation of S-adenosylmethionine from methionine and ATP. The reaction comprises two steps that are both catalyzed by the same enzyme: formation of S-adenosylmethionine (AdoMet) and triphosphate, and subsequent hydrolysis of the triphosphate. This is S-adenosylmethionine synthase 2 (SAM2) from Actinidia chinensis var. chinensis (Chinese soft-hair kiwi).